A 612-amino-acid chain; its full sequence is U-box domain-containing protein 11 (612 aa).

Residues 127–196 adopt a coiled-coil conformation; it reads DEVGEQVELA…LHFGEEEEKQ (70 aa). Positions 240–314 constitute a U-box domain; it reads TIPVDFLCPV…SRWCAEHNIE (75 aa). 5 ARM repeats span residues 363–402, 404–443, 445–484, 486–526, and 528–567; these read TDNRILIAEAGAIPVLVNLLTSEDVATQENAITCVLNLSI, ENNKELIMFAGAVTSIVQVLRAGTMEARENAAATLFSLSL, DENKIIIGGSGAIPALVDLLENGTPRGKKDAATALFNLCI, HGNK…VLAN, and QDAKSAIVKANTLPALIGILQTDQTRNRENAAAILLSLCK.

It catalyses the reaction S-ubiquitinyl-[E2 ubiquitin-conjugating enzyme]-L-cysteine + [acceptor protein]-L-lysine = [E2 ubiquitin-conjugating enzyme]-L-cysteine + N(6)-ubiquitinyl-[acceptor protein]-L-lysine.. It functions in the pathway protein modification; protein ubiquitination. In terms of biological role, functions as an E3 ubiquitin ligase. In Arabidopsis thaliana (Mouse-ear cress), this protein is U-box domain-containing protein 11 (PUB11).